Here is a 34-residue protein sequence, read N- to C-terminus: Photosystem II reaction center protein Psb30 (34 aa).

Residues 7-27 (VAQLISLFLILTSGPAIIVLI) form a helical membrane-spanning segment.

Belongs to the Psb30/Ycf12 family. As to quaternary structure, PSII is composed of 1 copy each of membrane proteins PsbA, PsbB, PsbC, PsbD, PsbE, PsbF, PsbH, PsbI, PsbJ, PsbK, PsbL, PsbM, PsbT, PsbX, PsbY, PsbZ, Psb30/Ycf12, peripheral proteins of the oxygen-evolving complex and a large number of cofactors. It forms dimeric complexes.

The protein localises to the plastid. The protein resides in the chloroplast thylakoid membrane. In terms of biological role, a core subunit of photosystem II (PSII), probably helps stabilize the reaction center. The sequence is that of Photosystem II reaction center protein Psb30 from Rhodomonas salina (Cryptomonas salina).